The primary structure comprises 204 residues: Holliday junction branch migration complex subunit RuvA (204 aa).

A domain I region spans residues methionine 1–leucine 63. The domain II stretch occupies residues threonine 64–aspartate 142. The flexible linker stretch occupies residues serine 143–threonine 153. The segment at threonine 153–serine 204 is domain III.

The protein belongs to the RuvA family. Homotetramer. Forms an RuvA(8)-RuvB(12)-Holliday junction (HJ) complex. HJ DNA is sandwiched between 2 RuvA tetramers; dsDNA enters through RuvA and exits via RuvB. An RuvB hexamer assembles on each DNA strand where it exits the tetramer. Each RuvB hexamer is contacted by two RuvA subunits (via domain III) on 2 adjacent RuvB subunits; this complex drives branch migration. In the full resolvosome a probable DNA-RuvA(4)-RuvB(12)-RuvC(2) complex forms which resolves the HJ.

It is found in the cytoplasm. In terms of biological role, the RuvA-RuvB-RuvC complex processes Holliday junction (HJ) DNA during genetic recombination and DNA repair, while the RuvA-RuvB complex plays an important role in the rescue of blocked DNA replication forks via replication fork reversal (RFR). RuvA specifically binds to HJ cruciform DNA, conferring on it an open structure. The RuvB hexamer acts as an ATP-dependent pump, pulling dsDNA into and through the RuvAB complex. HJ branch migration allows RuvC to scan DNA until it finds its consensus sequence, where it cleaves and resolves the cruciform DNA. The protein is Holliday junction branch migration complex subunit RuvA of Rickettsia canadensis (strain McKiel).